Consider the following 238-residue polypeptide: Protein shisa-3 homolog (238 aa).

The first 21 residues, 1–21, serve as a signal peptide directing secretion; the sequence is MRALLALCLLLGWLRWGPAGA. The Lumenal segment spans residues 22–98; the sequence is QQSGEYCHGW…GITAQPVYVP (77 aa). A helical transmembrane segment spans residues 99-119; the sequence is FLIVGSIFIAFIILGSVVAIY. Topologically, residues 120-238 are cytoplasmic; sequence CCTCLRPKEP…GKSCPDFSSS (119 aa). The disordered stretch occupies residues 151–173; the sequence is TSTSPRAPSRQSSTATSSSSTGG. Over residues 159–173 the composition is skewed to low complexity; it reads SRQSSTATSSSSTGG.

Belongs to the shisa family.

It localises to the endoplasmic reticulum membrane. Its function is as follows. Plays an essential role in the maturation of presomitic mesoderm cells by individual attenuation of both FGF and WNT signaling. The sequence is that of Protein shisa-3 homolog (SHISA3) from Homo sapiens (Human).